The primary structure comprises 477 residues: Bifunctional protein HldE (477 aa).

A ribokinase region spans residues Met-1 to Thr-318. Residue Lys-179 is modified to N6-acetyllysine. Asn-195–Glu-198 contacts ATP. Asp-264 is an active-site residue. Positions Met-344 to Gly-477 are cytidylyltransferase.

The protein in the N-terminal section; belongs to the carbohydrate kinase PfkB family. This sequence in the C-terminal section; belongs to the cytidylyltransferase family. As to quaternary structure, homodimer.

It carries out the reaction D-glycero-beta-D-manno-heptose 7-phosphate + ATP = D-glycero-beta-D-manno-heptose 1,7-bisphosphate + ADP + H(+). The catalysed reaction is D-glycero-beta-D-manno-heptose 1-phosphate + ATP + H(+) = ADP-D-glycero-beta-D-manno-heptose + diphosphate. The protein operates within nucleotide-sugar biosynthesis; ADP-L-glycero-beta-D-manno-heptose biosynthesis; ADP-L-glycero-beta-D-manno-heptose from D-glycero-beta-D-manno-heptose 7-phosphate: step 1/4. It functions in the pathway nucleotide-sugar biosynthesis; ADP-L-glycero-beta-D-manno-heptose biosynthesis; ADP-L-glycero-beta-D-manno-heptose from D-glycero-beta-D-manno-heptose 7-phosphate: step 3/4. Catalyzes the phosphorylation of D-glycero-D-manno-heptose 7-phosphate at the C-1 position to selectively form D-glycero-beta-D-manno-heptose-1,7-bisphosphate. In terms of biological role, catalyzes the ADP transfer from ATP to D-glycero-beta-D-manno-heptose 1-phosphate, yielding ADP-D-glycero-beta-D-manno-heptose. This Escherichia coli O17:K52:H18 (strain UMN026 / ExPEC) protein is Bifunctional protein HldE.